We begin with the raw amino-acid sequence, 144 residues long: Large ribosomal subunit protein uL22 (144 aa).

Positions Glu-123 to Gln-144 are disordered. Residues Val-125–Gln-144 show a composition bias toward basic residues.

Belongs to the universal ribosomal protein uL22 family. As to quaternary structure, part of the 50S ribosomal subunit.

This protein binds specifically to 23S rRNA; its binding is stimulated by other ribosomal proteins, e.g. L4, L17, and L20. It is important during the early stages of 50S assembly. It makes multiple contacts with different domains of the 23S rRNA in the assembled 50S subunit and ribosome. In terms of biological role, the globular domain of the protein is located near the polypeptide exit tunnel on the outside of the subunit, while an extended beta-hairpin is found that lines the wall of the exit tunnel in the center of the 70S ribosome. This chain is Large ribosomal subunit protein uL22, found in Mycoplasma genitalium (strain ATCC 33530 / DSM 19775 / NCTC 10195 / G37) (Mycoplasmoides genitalium).